A 344-amino-acid polypeptide reads, in one-letter code: Succinylglutamate desuccinylase (344 aa).

H63, E66, and H160 together coordinate Zn(2+). E224 is an active-site residue.

It belongs to the AspA/AstE family. Succinylglutamate desuccinylase subfamily. Zn(2+) serves as cofactor.

The catalysed reaction is N-succinyl-L-glutamate + H2O = L-glutamate + succinate. The protein operates within amino-acid degradation; L-arginine degradation via AST pathway; L-glutamate and succinate from L-arginine: step 5/5. Its function is as follows. Transforms N(2)-succinylglutamate into succinate and glutamate. This is Succinylglutamate desuccinylase from Shewanella baltica (strain OS223).